The primary structure comprises 433 residues: 23S rRNA (uracil(1939)-C(5))-methyltransferase RlmD (433 aa).

One can recognise a TRAM domain in the interval 10 to 68 (RTTTRQIITVSVNDLDSFGQGVARHNGKTLFIPGLLPQENAEVAVTEDKKQYARAKVVR). Positions 81, 87, 90, and 162 each coordinate [4Fe-4S] cluster. 6 residues coordinate S-adenosyl-L-methionine: Q265, F294, N299, E315, N342, and D363. C389 (nucleophile) is an active-site residue.

The protein belongs to the class I-like SAM-binding methyltransferase superfamily. RNA M5U methyltransferase family. RlmD subfamily.

The catalysed reaction is uridine(1939) in 23S rRNA + S-adenosyl-L-methionine = 5-methyluridine(1939) in 23S rRNA + S-adenosyl-L-homocysteine + H(+). Its function is as follows. Catalyzes the formation of 5-methyl-uridine at position 1939 (m5U1939) in 23S rRNA. The polypeptide is 23S rRNA (uracil(1939)-C(5))-methyltransferase RlmD (Shigella flexneri).